We begin with the raw amino-acid sequence, 132 residues long: Small ribosomal subunit protein uS8 (132 aa).

Belongs to the universal ribosomal protein uS8 family. As to quaternary structure, part of the 30S ribosomal subunit. Contacts proteins S5 and S12.

One of the primary rRNA binding proteins, it binds directly to 16S rRNA central domain where it helps coordinate assembly of the platform of the 30S subunit. This is Small ribosomal subunit protein uS8 from Bacillus cytotoxicus (strain DSM 22905 / CIP 110041 / 391-98 / NVH 391-98).